Consider the following 748-residue polypeptide: Histone-lysine N-methyltransferase EZH2 (748 aa).

Residues 183–199 (DYEDDEDGEDNQDDERD) show a composition bias toward acidic residues. Disordered stretches follow at residues 183-215 (DYED…KETL) and 347-428 (TPPK…NIEP). The span at 200 to 215 (DITKDQDDNMEEKETL) shows a compositional bias: basic and acidic residues. Residues 348–359 (PPKRPSGRRRGR) are compositionally biased toward basic residues. Positions 376-387 (EAKDTDSDREAG) are enriched in basic and acidic residues. In terms of domain architecture, CXC spans 505–607 (CRKIQLKKDG…SKNVSCKNCS (103 aa)). Positions 614 to 729 (KHLLLAPSDV…TGEELFFDYR (116 aa)) constitute an SET domain.

Belongs to the class V-like SAM-binding methyltransferase superfamily. Histone-lysine methyltransferase family. EZ subfamily. As to quaternary structure, component of the prc2/eed-ezh2 complex.

The protein resides in the nucleus. The enzyme catalyses L-lysyl(27)-[histone H3] + 3 S-adenosyl-L-methionine = N(6),N(6),N(6)-trimethyl-L-lysyl(27)-[histone H3] + 3 S-adenosyl-L-homocysteine + 3 H(+). Functionally, polycomb group (PcG) protein. Catalytic subunit of the prc2/eed-ezh2 complex, which methylates 'Lys-9' and 'Lys-27' of histone H3, leading to transcriptional repression of the affected target gene. May regulate the circadian clock via histone methylation at the promoter of the circadian genes. This Xenopus laevis (African clawed frog) protein is Histone-lysine N-methyltransferase EZH2 (ezh2-b).